Consider the following 881-residue polypeptide: Mechanosensitive ion channel protein 5 (881 aa).

Basic and acidic residues-rich tracts occupy residues 1–12 (MAAVDSTDRRDF) and 48–59 (DGEKGKNDKKGD). Residues 1 to 248 (MAAVDSTDRR…RNGFEEEEEE (248 aa)) are disordered. The span at 115–145 (ELQSNTPPRPATASNTPRRGLTTISESSSPV) shows a compositional bias: polar residues. Over residues 169–179 (EEGRNRDEAEV) the composition is skewed to basic and acidic residues. Residue Ser231 is modified to Phosphoserine. Helical transmembrane passes span 265 to 285 (LSFW…SLVC), 309 to 329 (VLVL…IVFL), 349 to 369 (KSVQ…FLFD), 387 to 407 (VLVC…LVKV), 642 to 662 (IINV…LGIA), and 677 to 697 (VAFV…FLFV). The segment at 861–881 (PTANPTSSDRIPPSWMQQRGP) is disordered. Polar residues predominate over residues 864 to 881 (NPTSSDRIPPSWMQQRGP).

It belongs to the MscS (TC 1.A.23) family.

It localises to the membrane. In terms of biological role, mechanosensitive channel that opens in response to stretch forces in the membrane lipid bilayer. This is Mechanosensitive ion channel protein 5 (MSL5) from Arabidopsis thaliana (Mouse-ear cress).